The following is a 417-amino-acid chain: Fatty-acid peroxygenase (417 aa).

Cys363 contributes to the heme binding site.

It belongs to the cytochrome P450 family. It depends on heme as a cofactor.

The catalysed reaction is a 1,2-saturated fatty acid + H2O2 = a 2-hydroxy fatty acid + H2O. The enzyme catalyses a 2,3-saturated fatty acid + H2O2 = a 3-hydroxy fatty acid + H2O. It catalyses the reaction tetradecanoate + H2O2 = (3R)-hydroxytetradecanoate + H2O. It carries out the reaction tetradecanoate + H2O2 = (2R)-hydroxytetradecanoate + H2O. The catalysed reaction is tetradecanoate + H2O2 = (2S)-hydroxytetradecanoate + H2O. Its function is as follows. Catalyzes the alpha- and beta-hydroxylation of myristic acid in the presence of hydrogen peroxide. This Bacillus subtilis (strain 168) protein is Fatty-acid peroxygenase (cypC).